The chain runs to 260 residues: Ribosomal RNA small subunit methyltransferase J (260 aa).

S-adenosyl-L-methionine is bound by residues 125 to 126 (ER) and Asp-179.

The protein belongs to the methyltransferase superfamily. RsmJ family.

Its subcellular location is the cytoplasm. The enzyme catalyses guanosine(1516) in 16S rRNA + S-adenosyl-L-methionine = N(2)-methylguanosine(1516) in 16S rRNA + S-adenosyl-L-homocysteine + H(+). Specifically methylates the guanosine in position 1516 of 16S rRNA. This chain is Ribosomal RNA small subunit methyltransferase J, found in Pseudomonas fluorescens (strain Pf0-1).